Reading from the N-terminus, the 244-residue chain is tRNA (guanine-N(7)-)-methyltransferase (244 aa).

The S-adenosyl-L-methionine site is built by Glu-75, Glu-100, Asp-127, and Asp-150. The active site involves Asp-150. Substrate-binding positions include Lys-154, Asp-186, and 223–226 (TRFE).

The protein belongs to the class I-like SAM-binding methyltransferase superfamily. TrmB family.

The catalysed reaction is guanosine(46) in tRNA + S-adenosyl-L-methionine = N(7)-methylguanosine(46) in tRNA + S-adenosyl-L-homocysteine. The protein operates within tRNA modification; N(7)-methylguanine-tRNA biosynthesis. Catalyzes the formation of N(7)-methylguanine at position 46 (m7G46) in tRNA. The sequence is that of tRNA (guanine-N(7)-)-methyltransferase from Xylella fastidiosa (strain 9a5c).